A 1323-amino-acid chain; its full sequence is ABC transporter gloK (1323 aa).

The next 7 membrane-spanning stretches (helical) occupy residues 6–26, 102–122, 138–158, 217–237, 240–260, 325–345, and 359–379; these read AIAS…TLEA, PHAL…AGIL, VAYG…VMST, IWAS…RLGV, VAAV…VFGF, LLVG…VFAF, and PLLA…GQAV. The 239-residue stretch at 142 to 380 folds into the ABC transmembrane type-1 1 domain; that stretch reads LIAAYAIVYI…IFSLLGQAVS (239 aa). The 227-residue stretch at 471–697 folds into the ABC transporter 1 domain; that stretch reads IRDCSACWSK…SSYLESLGTR (227 aa). 503-510 contacts ATP; the sequence is GPIGSGKS. The next 7 helical transmembrane spans lie at 748–768, 795–815, 821–841, 859–879, 891–910, 976–996, and 1006–1026; these read GWVT…GLVF, YALW…WLMI, AAIQ…LVYF, LIDM…LSCI, YVAA…QLFY, LNLT…SIAL, and IGVA…LVYT. The ABC transmembrane type-1 2 domain occupies 752–1031; it reads WWVFVLLCSG…TLVYTWTSLE (280 aa). Positions 1069–1300 constitute an ABC transporter 2 domain; sequence IRFQSVSAAY…PSFFASLLKA (232 aa). Residue 1103–1110 coordinates ATP; sequence GRTGSGKS.

The protein belongs to the ABC transporter superfamily. ABCC family. Conjugate transporter (TC 3.A.1.208) subfamily.

The protein localises to the cell membrane. In terms of biological role, 3-isopropylmalate dehydratase large subunit; part of the gene cluster that mediates the biosynthesis of pneumocandins, lipohexapeptides of the echinocandin family that prevent fungal cell wall formation by non-competitive inhibition of beta-1,3-glucan synthase. Possibly secretes antifungal pneumocandins, thus avoiding of intracellular accumulation and ameliorating the toxicity to the producing cells. The sequence is that of ABC transporter gloK from Glarea lozoyensis (strain ATCC 20868 / MF5171).